Here is a 380-residue protein sequence, read N- to C-terminus: 2-aminoethylphosphonate--pyruvate transaminase (380 aa).

An N6-(pyridoxal phosphate)lysine modification is found at K204.

This sequence belongs to the class-V pyridoxal-phosphate-dependent aminotransferase family. PhnW subfamily. Homodimer. Requires pyridoxal 5'-phosphate as cofactor.

It carries out the reaction (2-aminoethyl)phosphonate + pyruvate = phosphonoacetaldehyde + L-alanine. Involved in phosphonate degradation. The protein is 2-aminoethylphosphonate--pyruvate transaminase of Aeromonas hydrophila subsp. hydrophila (strain ATCC 7966 / DSM 30187 / BCRC 13018 / CCUG 14551 / JCM 1027 / KCTC 2358 / NCIMB 9240 / NCTC 8049).